A 352-amino-acid polypeptide reads, in one-letter code: MIKRRKTREIDVGGVKIGGDNPVVVQSMTDTKTHNIEETLSQIKRLADAGCEIIRVAVPTEKDAEALKEIVKRSPIPVIADIHFSPRIAFTALESGIHGIRLNPGNINDEGKIREILQECKKKNITVRLGVNSGSLEMGILEKYGFPSGEALAESALNWSEFFEKVGFTKFKVSIKGSDVLQNIEANKIFAEKTDIPLHIGITEAGPAGRGSVKSAVGLGILLYMGIGDTVRVSLTADPEEEVKVAYQILQSLGLRRRGIEIVSCPTCGRIEVNLPEVVRKVEEKLDGKNIPIKVAIMGCVVNAIGEAREADIGLACGNKSAILFKKGEPVKRVSEDQMIDQLLKEIDNLEI.

[4Fe-4S] cluster-binding residues include C265, C268, C300, and E307.

Belongs to the IspG family. The cofactor is [4Fe-4S] cluster.

The enzyme catalyses (2E)-4-hydroxy-3-methylbut-2-enyl diphosphate + oxidized [flavodoxin] + H2O + 2 H(+) = 2-C-methyl-D-erythritol 2,4-cyclic diphosphate + reduced [flavodoxin]. Its pathway is isoprenoid biosynthesis; isopentenyl diphosphate biosynthesis via DXP pathway; isopentenyl diphosphate from 1-deoxy-D-xylulose 5-phosphate: step 5/6. Its function is as follows. Converts 2C-methyl-D-erythritol 2,4-cyclodiphosphate (ME-2,4cPP) into 1-hydroxy-2-methyl-2-(E)-butenyl 4-diphosphate. In Persephonella marina (strain DSM 14350 / EX-H1), this protein is 4-hydroxy-3-methylbut-2-en-1-yl diphosphate synthase (flavodoxin).